The following is a 241-amino-acid chain: 1-(5-phosphoribosyl)-5-[(5-phosphoribosylamino)methylideneamino] imidazole-4-carboxamide isomerase (241 aa).

The active-site Proton acceptor is Asp-8. Asp-130 serves as the catalytic Proton donor.

The protein belongs to the HisA/HisF family.

It is found in the cytoplasm. The catalysed reaction is 1-(5-phospho-beta-D-ribosyl)-5-[(5-phospho-beta-D-ribosylamino)methylideneamino]imidazole-4-carboxamide = 5-[(5-phospho-1-deoxy-D-ribulos-1-ylimino)methylamino]-1-(5-phospho-beta-D-ribosyl)imidazole-4-carboxamide. The protein operates within amino-acid biosynthesis; L-histidine biosynthesis; L-histidine from 5-phospho-alpha-D-ribose 1-diphosphate: step 4/9. In Francisella philomiragia subsp. philomiragia (strain ATCC 25017 / CCUG 19701 / FSC 153 / O#319-036), this protein is 1-(5-phosphoribosyl)-5-[(5-phosphoribosylamino)methylideneamino] imidazole-4-carboxamide isomerase.